The chain runs to 180 residues: Colicin-E5 (180 aa).

2 disordered regions span residues 24 to 143 (AQTD…GSPG) and 155 to 180 (VTQISDKTDPGWVDDSRIQWGNKNDQ). Over residues 54–76 (ESRKKKEDNKRDAEGKLNDELAK) the composition is skewed to basic and acidic residues. The nuclease stretch occupies residues 74–180 (LAKNKGKIPG…RIQWGNKNDQ (107 aa)). The span at 106–116 (NTVSNGATGTS) shows a compositional bias: polar residues. Basic and acidic residues predominate over residues 160 to 171 (DKTDPGWVDDSR).

It belongs to the colicin/pyosin nuclease family.

Its function is as follows. Colicins are polypeptide toxins produced by and active against E.coli and closely related bacteria. This colicin is an endonuclease. In Escherichia coli, this protein is Colicin-E5 (col).